The primary structure comprises 494 residues: Probable cytosol aminopeptidase (494 aa).

Mn(2+) is bound by residues Lys260 and Asp265. Residue Lys272 is part of the active site. Residues Asp283, Asp342, and Glu344 each contribute to the Mn(2+) site. The active site involves Arg346.

This sequence belongs to the peptidase M17 family. The cofactor is Mn(2+).

The protein resides in the cytoplasm. It carries out the reaction Release of an N-terminal amino acid, Xaa-|-Yaa-, in which Xaa is preferably Leu, but may be other amino acids including Pro although not Arg or Lys, and Yaa may be Pro. Amino acid amides and methyl esters are also readily hydrolyzed, but rates on arylamides are exceedingly low.. The catalysed reaction is Release of an N-terminal amino acid, preferentially leucine, but not glutamic or aspartic acids.. Functionally, presumably involved in the processing and regular turnover of intracellular proteins. Catalyzes the removal of unsubstituted N-terminal amino acids from various peptides. This chain is Probable cytosol aminopeptidase, found in Bacillus cereus (strain ATCC 14579 / DSM 31 / CCUG 7414 / JCM 2152 / NBRC 15305 / NCIMB 9373 / NCTC 2599 / NRRL B-3711).